The sequence spans 599 residues: UvrABC system protein C (599 aa).

The region spanning 15–93 (PCPGVYRMLD…IKALQPRYNV (79 aa)) is the GIY-YIG domain. Residues 202–237 (QQVINELVIRMEEASGQLAFEQAAYYRDRIASLRQI) form the UVR domain.

The protein belongs to the UvrC family. As to quaternary structure, interacts with UvrB in an incision complex.

Its subcellular location is the cytoplasm. In terms of biological role, the UvrABC repair system catalyzes the recognition and processing of DNA lesions. UvrC both incises the 5' and 3' sides of the lesion. The N-terminal half is responsible for the 3' incision and the C-terminal half is responsible for the 5' incision. This chain is UvrABC system protein C, found in Nitrosococcus oceani (strain ATCC 19707 / BCRC 17464 / JCM 30415 / NCIMB 11848 / C-107).